A 442-amino-acid polypeptide reads, in one-letter code: tRNA modification GTPase MnmE (442 aa).

Residues arginine 22, glutamate 79, and lysine 118 each contribute to the (6S)-5-formyl-5,6,7,8-tetrahydrofolate site. A TrmE-type G domain is found at 215 to 365 (EIPIAIVGRP…LEKAILFEYQ (151 aa)). Residue asparagine 225 coordinates K(+). GTP contacts are provided by residues 225–230 (NVGKSS), 244–250 (TNIEGTT), and 269–272 (DTAG). Position 229 (serine 229) interacts with Mg(2+). Positions 244, 246, and 249 each coordinate K(+). Threonine 250 serves as a coordination point for Mg(2+). Residue lysine 442 coordinates (6S)-5-formyl-5,6,7,8-tetrahydrofolate.

The protein belongs to the TRAFAC class TrmE-Era-EngA-EngB-Septin-like GTPase superfamily. TrmE GTPase family. Homodimer. Heterotetramer of two MnmE and two MnmG subunits. It depends on K(+) as a cofactor.

It is found in the cytoplasm. Exhibits a very high intrinsic GTPase hydrolysis rate. Involved in the addition of a carboxymethylaminomethyl (cmnm) group at the wobble position (U34) of certain tRNAs, forming tRNA-cmnm(5)s(2)U34. The polypeptide is tRNA modification GTPase MnmE (Mycoplasmopsis pulmonis (strain UAB CTIP) (Mycoplasma pulmonis)).